Here is a 327-residue protein sequence, read N- to C-terminus: Methionine import ATP-binding protein MetN (327 aa).

Residues 3 to 239 (VELKNIEKIY…PKHAVTKELL (237 aa)) form the ABC transporter domain. 36–43 (GYSGAGKS) lines the ATP pocket.

Belongs to the ABC transporter superfamily. Methionine importer (TC 3.A.1.24) family. As to quaternary structure, the complex is composed of two ATP-binding proteins (MetN), two transmembrane proteins (MetI) and a solute-binding protein (MetQ).

The protein localises to the cell inner membrane. It catalyses the reaction L-methionine(out) + ATP + H2O = L-methionine(in) + ADP + phosphate + H(+). The enzyme catalyses D-methionine(out) + ATP + H2O = D-methionine(in) + ADP + phosphate + H(+). Functionally, part of the ABC transporter complex MetNIQ involved in methionine import. Responsible for energy coupling to the transport system. This chain is Methionine import ATP-binding protein MetN, found in Helicobacter pylori (strain ATCC 700392 / 26695) (Campylobacter pylori).